Consider the following 125-residue polypeptide: Small ribosomal subunit protein uS13 (125 aa).

Residues 95–125 (GLPLRGQRTKTNARTRKGKRKTVANKKIASK) are disordered.

The protein belongs to the universal ribosomal protein uS13 family. In terms of assembly, part of the 30S ribosomal subunit. Forms a loose heterodimer with protein S19. Forms two bridges to the 50S subunit in the 70S ribosome.

In terms of biological role, located at the top of the head of the 30S subunit, it contacts several helices of the 16S rRNA. In the 70S ribosome it contacts the 23S rRNA (bridge B1a) and protein L5 of the 50S subunit (bridge B1b), connecting the 2 subunits; these bridges are implicated in subunit movement. Contacts the tRNAs in the A and P-sites. This Borreliella burgdorferi (strain ATCC 35210 / DSM 4680 / CIP 102532 / B31) (Borrelia burgdorferi) protein is Small ribosomal subunit protein uS13.